Consider the following 340-residue polypeptide: Protein-glutamate methylesterase/protein-glutamine glutaminase 1 (340 aa).

Positions 5–122 (KLFIVDDSAL…KVVSELKEKI (118 aa)) constitute a Response regulatory domain. The residue at position 56 (aspartate 56) is a 4-aspartylphosphate. The 193-residue stretch at 148-340 (GKNGRQLVVI…AIAEEIAANI (193 aa)) folds into the CheB-type methylesterase domain. Catalysis depends on residues serine 160, histidine 187, and aspartate 285.

This sequence belongs to the CheB family. Post-translationally, phosphorylated by CheA. Phosphorylation of the N-terminal regulatory domain activates the methylesterase activity.

Its subcellular location is the cytoplasm. It carries out the reaction [protein]-L-glutamate 5-O-methyl ester + H2O = L-glutamyl-[protein] + methanol + H(+). The enzyme catalyses L-glutaminyl-[protein] + H2O = L-glutamyl-[protein] + NH4(+). In terms of biological role, involved in chemotaxis. Part of a chemotaxis signal transduction system that modulates chemotaxis in response to various stimuli. Catalyzes the demethylation of specific methylglutamate residues introduced into the chemoreceptors (methyl-accepting chemotaxis proteins or MCP) by CheR. Also mediates the irreversible deamidation of specific glutamine residues to glutamic acid. The protein is Protein-glutamate methylesterase/protein-glutamine glutaminase 1 of Carboxydothermus hydrogenoformans (strain ATCC BAA-161 / DSM 6008 / Z-2901).